The following is a 397-amino-acid chain: Enoyl-[acyl-carrier-protein] reductase [NADH] (397 aa).

Residues Gly48–Tyr53, Leu74–Glu75, Asp111–Ala112, and Leu139–Ala140 each bind NAD(+). Tyr225 is a binding site for substrate. The active-site Proton donor is Tyr235. Residues Lys244 and Val273–Thr275 contribute to the NAD(+) site.

Belongs to the TER reductase family. In terms of assembly, monomer.

It carries out the reaction a 2,3-saturated acyl-[ACP] + NAD(+) = a (2E)-enoyl-[ACP] + NADH + H(+). Its pathway is lipid metabolism; fatty acid biosynthesis. Functionally, involved in the final reduction of the elongation cycle of fatty acid synthesis (FAS II). Catalyzes the reduction of a carbon-carbon double bond in an enoyl moiety that is covalently linked to an acyl carrier protein (ACP). The protein is Enoyl-[acyl-carrier-protein] reductase [NADH] of Tolumonas auensis (strain DSM 9187 / NBRC 110442 / TA 4).